The sequence spans 251 residues: CCN family member 5 (251 aa).

Residues 1 to 23 form the signal peptide; sequence MRGNPLIHLLAISFLCILSMVYS. The region spanning 24 to 103 is the IGFBP N-terminal domain; it reads QLCPAPCACP…EEDDGSCEVN (80 aa). Disulfide bonds link Cys-26–Cys-50, Cys-30–Cys-52, Cys-32–Cys-53, Cys-39–Cys-56, Cys-64–Cys-78, and Cys-70–Cys-100. Residues 98-164 form the VWFC domain; it reads GSCEVNGRRY…GRCCPEWVCD (67 aa). Residues 195-239 enclose the TSP type-1 domain; the sequence is CPNWSTAWGPCSTTCGLGIATRVSNQNRFCQLEIQRRLCLSRPCL. Asn-197 carries an N-linked (GlcNAc...) asparagine glycan.

It belongs to the CCN family.

The protein localises to the secreted. Its function is as follows. May play an important role in modulating bone turnover. Promotes the adhesion of osteoblast cells and inhibits the binding of fibrinogen to integrin receptors. In addition, inhibits osteocalcin production. This Mus musculus (Mouse) protein is CCN family member 5 (Ccn5).